Reading from the N-terminus, the 349-residue chain is Glucose 1-dehydrogenase 1 (349 aa).

Cysteine 39 provides a ligand contact to Zn(2+). Threonine 41 provides a ligand contact to substrate. Positions 64 and 65 each coordinate Zn(2+). Residues glutamate 110 and glutamate 146 each contribute to the substrate site. Residue glutamate 146 participates in Zn(2+) binding. Residues 178-181 (AGPI), 260-262 (LGV), and 289-291 (SVN) contribute to the NADP(+) site. Position 291 (asparagine 291) interacts with substrate.

It belongs to the zinc-containing alcohol dehydrogenase family. Glucose 1-dehydrogenase subfamily. The cofactor is Zn(2+).

It carries out the reaction D-glucose + NAD(+) = D-glucono-1,5-lactone + NADH + H(+). The catalysed reaction is D-glucose + NADP(+) = D-glucono-1,5-lactone + NADPH + H(+). Functionally, catalyzes the NAD(P)(+)-dependent oxidation of D-glucose to D-gluconate via gluconolactone. Can utilize both NAD(+) and NADP(+) as electron acceptor. Is involved in the degradation of glucose through a non-phosphorylative variant of the Entner-Doudoroff pathway. The sequence is that of Glucose 1-dehydrogenase 1 from Caldivirga maquilingensis (strain ATCC 700844 / DSM 13496 / JCM 10307 / IC-167).